Consider the following 444-residue polypeptide: 3-phosphoshikimate 1-carboxyvinyltransferase (444 aa).

3 residues coordinate 3-phosphoshikimate: K29, S30, and R34. K29 is a binding site for phosphoenolpyruvate. Phosphoenolpyruvate is bound by residues G102 and R131. S176, Q178, D326, and K353 together coordinate 3-phosphoshikimate. Q178 is a binding site for phosphoenolpyruvate. D326 acts as the Proton acceptor in catalysis. Phosphoenolpyruvate contacts are provided by R357 and R399.

The protein belongs to the EPSP synthase family. Monomer.

Its subcellular location is the cytoplasm. It carries out the reaction 3-phosphoshikimate + phosphoenolpyruvate = 5-O-(1-carboxyvinyl)-3-phosphoshikimate + phosphate. It participates in metabolic intermediate biosynthesis; chorismate biosynthesis; chorismate from D-erythrose 4-phosphate and phosphoenolpyruvate: step 6/7. Catalyzes the transfer of the enolpyruvyl moiety of phosphoenolpyruvate (PEP) to the 5-hydroxyl of shikimate-3-phosphate (S3P) to produce enolpyruvyl shikimate-3-phosphate and inorganic phosphate. In Synechococcus sp. (strain JA-3-3Ab) (Cyanobacteria bacterium Yellowstone A-Prime), this protein is 3-phosphoshikimate 1-carboxyvinyltransferase.